Consider the following 612-residue polypeptide: UvrABC system protein C (612 aa).

Positions 20 to 98 constitute a GIY-YIG domain; it reads THSGVYRMLD…IKQHRPKYNI (79 aa). In terms of domain architecture, UVR spans 208–243; sequence SSVLEEISAKMYQASEDMEYEKAQVYRDQLVILRKL.

Belongs to the UvrC family. As to quaternary structure, interacts with UvrB in an incision complex.

It is found in the cytoplasm. Functionally, the UvrABC repair system catalyzes the recognition and processing of DNA lesions. UvrC both incises the 5' and 3' sides of the lesion. The N-terminal half is responsible for the 3' incision and the C-terminal half is responsible for the 5' incision. The sequence is that of UvrABC system protein C from Francisella philomiragia subsp. philomiragia (strain ATCC 25017 / CCUG 19701 / FSC 153 / O#319-036).